We begin with the raw amino-acid sequence, 260 residues long: Histidinol-phosphatase (260 aa).

Residues Glu-67, Asp-83, Ile-85, and Asp-86 each coordinate Mg(2+). Glu-67 contributes to the substrate binding site. Substrate contacts are provided by residues 85–88 (IDGT), Arg-185, and Asp-213. Residue Asp-213 participates in Mg(2+) binding.

It belongs to the inositol monophosphatase superfamily. Mg(2+) is required as a cofactor.

The enzyme catalyses L-histidinol phosphate + H2O = L-histidinol + phosphate. It functions in the pathway amino-acid biosynthesis; L-histidine biosynthesis; L-histidine from 5-phospho-alpha-D-ribose 1-diphosphate: step 8/9. In terms of biological role, catalyzes the dephosphorylation of histidinol-phosphate to histidinol, the direct precursor of histidine. The sequence is that of Histidinol-phosphatase (hisN) from Mycobacterium tuberculosis (strain ATCC 25618 / H37Rv).